The primary structure comprises 602 residues: Proteasome-associated ATPase (602 aa).

A compositionally biased stretch (low complexity) spans 1–17 (MSGPRSGSGSDGSTGRP). The segment at 1–31 (MSGPRSGSGSDGSTGRPGDAESRRSAYEKET) is disordered. The segment covering 18 to 31 (GDAESRRSAYEKET) has biased composition (basic and acidic residues). The stretch at 19–106 (DAESRRSAYE…LKEEVDRLAQ (88 aa)) forms a coiled coil. 289-294 (GCGKTL) contacts ATP. The segment at 601–602 (YL) is docks into pockets in the proteasome alpha-ring.

It belongs to the AAA ATPase family. In terms of assembly, homohexamer. Assembles into a hexameric ring structure that caps the 20S proteasome core. Strongly interacts with the prokaryotic ubiquitin-like protein Pup through a hydrophobic interface; the interacting region of ARC lies in its N-terminal coiled-coil domain. There is one Pup binding site per ARC hexamer ring. Upon ATP-binding, the C-terminus of ARC interacts with the alpha-rings of the proteasome core, possibly by binding to the intersubunit pockets.

It participates in protein degradation; proteasomal Pup-dependent pathway. In terms of biological role, ATPase which is responsible for recognizing, binding, unfolding and translocation of pupylated proteins into the bacterial 20S proteasome core particle. May be essential for opening the gate of the 20S proteasome via an interaction with its C-terminus, thereby allowing substrate entry and access to the site of proteolysis. Thus, the C-termini of the proteasomal ATPase may function like a 'key in a lock' to induce gate opening and therefore regulate proteolysis. This Frankia casuarinae (strain DSM 45818 / CECT 9043 / HFP020203 / CcI3) protein is Proteasome-associated ATPase.